The sequence spans 495 residues: Meiosis-specific nuclear structural protein 1 (495 aa).

The tract at residues 1 to 315 (MASIRRTLSF…RLEEMLRQRE (315 aa)) is interaction with BBOF1. Coiled-coil stretches lie at residues 61 to 215 (QDEQ…EKLM) and 245 to 361 (IEEF…QMAL). A disordered region spans residues 172–199 (EESAAEDKRNQAKAQYSHDLEKQLEEQG).

It belongs to the MNS1 family. As to quaternary structure, able to form oligomers. Microtubule inner protein component of sperm flagellar doublet microtubules. Interacts with ODAD1. Interacts with BBOF1. In terms of tissue distribution, expressed in trachea multiciliated cells.

It localises to the nucleus. The protein localises to the cytoplasm. Its subcellular location is the cytoskeleton. It is found in the cilium axoneme. The protein resides in the flagellum axoneme. In terms of biological role, microtubule inner protein (MIP) part of the dynein-decorated doublet microtubules (DMTs) in cilia axoneme, which is required for motile cilia beating. May play a role in the control of meiotic division and germ cell differentiation through regulation of pairing and recombination during meiosis. Required for sperm flagella assembly. May play a role in the assembly and function of the outer dynein arm-docking complex (ODA-DC). ODA-DC mediates outer dynein arms (ODA) binding onto the axonemal doublet microtubules. The protein is Meiosis-specific nuclear structural protein 1 (MNS1) of Bos taurus (Bovine).